Consider the following 258-residue polypeptide: Aquaporin PIP1-2 (258 aa).

A disordered region spans residues 1–37 (MEGKEEDVRLGANKFTERQPIGTAAQSQDKDYKEPPP). Residues 1 to 55 (MEGKEEDVRLGANKFTERQPIGTAAQSQDKDYKEPPPAPLFEPGELSSWSFYRAG) are Cytoplasmic-facing. The helical transmembrane segment at 56-76 (IAEFVATFLFLYITILTVMGV) threads the bilayer. Over 77 to 89 (VKSSTKCSTVGIQ) the chain is Extracellular. A helical transmembrane segment spans residues 90-110 (GIAWAFGGMIFALVYCTAGIS). Topologically, residues 111–133 (GGHINPAVTFGLFLARKLSLTRA) are cytoplasmic. An NPA 1 motif is present at residues 115–117 (NPA). Residues 134–154 (LFYMVMQCLGAICGAGVVKGF) traverse the membrane as a helical segment. Residues 155–175 (QKGLYENNGGGANVVAPGYTK) are Extracellular-facing. The chain crosses the membrane as a helical span at residues 176–196 (GDGLGAEIVGTFILVYTVFSA). Topologically, residues 197-209 (TDAKRSARDSHVP) are cytoplasmic. A helical transmembrane segment spans residues 210-230 (ILAPLPIGFAVFLVHLATIPI). The Extracellular segment spans residues 231-258 (TGTGINPARSLGAAIIYNKGHAWDDHWI). The NPA 2 motif lies at 236–238 (NPA).

The protein belongs to the MIP/aquaporin (TC 1.A.8) family. PIP (TC 1.A.8.11) subfamily. In terms of tissue distribution, barely detectable in roots, leaves and fruits.

Its subcellular location is the cell membrane. Water channel required to facilitate the transport of water across cell membrane; mercury-insensitive. Contributes to the tolerance to multiple abiotic stresses including salt (NaCl), cold and water deprivation, by modulating cytosolic K(+)/Na(+) ratio, maintaining osmotic balance, and reducing membrane injury (e.g. oxidative injury). The chain is Aquaporin PIP1-2 from Musa acuminata (Banana).